The following is a 323-amino-acid chain: Lipoyl synthase (323 aa).

A disordered region spans residues 1–27; that stretch reads MVTILDRTSSDEKRIRHPEKAHRPDTE. [4Fe-4S] cluster contacts are provided by Cys-61, Cys-66, Cys-72, Cys-87, Cys-91, Cys-94, and Ser-300. A Radical SAM core domain is found at 73–289; it reads WEKKHATFMI…ETVAYAKGFL (217 aa).

It belongs to the radical SAM superfamily. Lipoyl synthase family. The cofactor is [4Fe-4S] cluster.

It is found in the cytoplasm. The catalysed reaction is [[Fe-S] cluster scaffold protein carrying a second [4Fe-4S](2+) cluster] + N(6)-octanoyl-L-lysyl-[protein] + 2 oxidized [2Fe-2S]-[ferredoxin] + 2 S-adenosyl-L-methionine + 4 H(+) = [[Fe-S] cluster scaffold protein] + N(6)-[(R)-dihydrolipoyl]-L-lysyl-[protein] + 4 Fe(3+) + 2 hydrogen sulfide + 2 5'-deoxyadenosine + 2 L-methionine + 2 reduced [2Fe-2S]-[ferredoxin]. Its pathway is protein modification; protein lipoylation via endogenous pathway; protein N(6)-(lipoyl)lysine from octanoyl-[acyl-carrier-protein]: step 2/2. Functionally, catalyzes the radical-mediated insertion of two sulfur atoms into the C-6 and C-8 positions of the octanoyl moiety bound to the lipoyl domains of lipoate-dependent enzymes, thereby converting the octanoylated domains into lipoylated derivatives. In Agrobacterium fabrum (strain C58 / ATCC 33970) (Agrobacterium tumefaciens (strain C58)), this protein is Lipoyl synthase.